Consider the following 218-residue polypeptide: Pyridoxine/pyridoxamine 5'-phosphate oxidase (218 aa).

Residues 14-17 and lysine 72 each bind substrate; that span reads RREY. Residues 67 to 72, 82 to 83, arginine 88, lysine 89, and glutamine 111 contribute to the FMN site; these read RIVLLK and YT. Residues tyrosine 129, arginine 133, and serine 137 each coordinate substrate. FMN is bound by residues 146–147 and tryptophan 191; that span reads QS. 197-199 is a binding site for substrate; that stretch reads RLH. Arginine 201 is a binding site for FMN.

This sequence belongs to the pyridoxamine 5'-phosphate oxidase family. Homodimer. FMN is required as a cofactor.

The catalysed reaction is pyridoxamine 5'-phosphate + O2 + H2O = pyridoxal 5'-phosphate + H2O2 + NH4(+). It catalyses the reaction pyridoxine 5'-phosphate + O2 = pyridoxal 5'-phosphate + H2O2. The protein operates within cofactor metabolism; pyridoxal 5'-phosphate salvage; pyridoxal 5'-phosphate from pyridoxamine 5'-phosphate: step 1/1. It functions in the pathway cofactor metabolism; pyridoxal 5'-phosphate salvage; pyridoxal 5'-phosphate from pyridoxine 5'-phosphate: step 1/1. Catalyzes the oxidation of either pyridoxine 5'-phosphate (PNP) or pyridoxamine 5'-phosphate (PMP) into pyridoxal 5'-phosphate (PLP). The sequence is that of Pyridoxine/pyridoxamine 5'-phosphate oxidase from Escherichia coli O139:H28 (strain E24377A / ETEC).